The chain runs to 103 residues: Truncated secreted TNF-receptor-like protein A53 (103 aa).

A TNFR-Cys 1 repeat occupies 36–73; that stretch reads SCDKGEYLDKRHNQCCNRCPPGEFAKVRCNGNDNTKCE. 3 cysteine pairs are disulfide-bonded: Cys-37-Cys-50, Cys-51-Cys-64, and Cys-54-Cys-72. The stretch at 74-103 is one TNFR-Cys 2; truncated repeat; it reads RCPPHTYTTIPIILMDVINVENAQQDHLIR.

The protein belongs to the poxviridae A53R protein family.

The chain is Truncated secreted TNF-receptor-like protein A53 from Vaccinia virus (strain Copenhagen) (VACV).